The chain runs to 681 residues: Probable L-type lectin-domain containing receptor kinase VII.2 (681 aa).

Positions 1 to 23 (MFSKVSILLFSLASLLLFRSTTG) are cleaved as a signal peptide. Residues 24 to 260 (IEFIYNSNFT…SHRILSWSFS (237 aa)) form a legume-lectin like region. At 24-290 (IEFIYNSNFT…SGDSVLKSKG (267 aa)) the chain is on the extracellular side. N-linked (GlcNAc...) asparagine glycans are attached at residues N31, N42, N56, N72, N126, N202, N207, N228, and N263. Residues 291–311 (FIAGVSSGVVLLVSVIGLLCF) traverse the membrane as a helical segment. Residues 312–681 (YVVRRRRQRL…QTYDSILHGR (370 aa)) are Cytoplasmic-facing. The 276-residue stretch at 349-624 (FSDENMIGYG…VVQILEQGRL (276 aa)) folds into the Protein kinase domain. ATP is bound by residues 355–363 (IGYGGNSKV) and K376. D475 serves as the catalytic Proton acceptor.

In the C-terminal section; belongs to the protein kinase superfamily. Ser/Thr protein kinase family. This sequence in the N-terminal section; belongs to the leguminous lectin family.

It is found in the cell membrane. The catalysed reaction is L-seryl-[protein] + ATP = O-phospho-L-seryl-[protein] + ADP + H(+). It catalyses the reaction L-threonyl-[protein] + ATP = O-phospho-L-threonyl-[protein] + ADP + H(+). The chain is Probable L-type lectin-domain containing receptor kinase VII.2 (LECRK72) from Arabidopsis thaliana (Mouse-ear cress).